The sequence spans 153 residues: UPF0756 membrane protein lmo1568 (153 aa).

Transmembrane regions (helical) follow at residues 6–26 (MLFL…SLII), 54–74 (WGVT…QIGF), 80–100 (SFKS…SILA), and 117–137 (LVFG…GPVI).

The protein belongs to the UPF0756 family.

The protein localises to the cell membrane. The protein is UPF0756 membrane protein lmo1568 of Listeria monocytogenes serovar 1/2a (strain ATCC BAA-679 / EGD-e).